The following is a 916-amino-acid chain: Beta-scruin (916 aa).

6 Kelch repeats span residues 82–133 (AVLI…YFHG), 134–187 (KVYL…IMDE), 188–235 (RIFV…NNEG), 237–289 (IYVV…TQNK), 291–341 (IWIW…KAGT), and 342–390 (QVFI…GIPV). The disordered stretch occupies residues 393–426 (SPASDITTSKTTRSGSRKTQKTLKDKQQSDIHAR). A compositionally biased stretch (basic and acidic residues) spans 414–425 (TLKDKQQSDIHA). 6 Kelch repeats span residues 586–637 (VIIA…YYRG), 638–691 (AIYV…VFND), 692–739 (SIYV…SHGG), 741–793 (LWVM…VCDD), 795–847 (IWLC…ALES), and 849–896 (LYLI…TIPP).

As to expression, sperm.

Functionally, may have an enzymatic role. Found the acrosomal vesicle at the anterior of sperm but not in the acrosomal process. This is Beta-scruin from Limulus polyphemus (Atlantic horseshoe crab).